The primary structure comprises 318 residues: Thiohydrolase aneE (318 aa).

It belongs to the polyketide transferase af380 family.

The catalysed reaction is aculene D + L-prolyl-[peptidyl-carrier protein] = aculene B + holo-[peptidyl-carrier protein]. It carries out the reaction aculene C + L-prolyl-[peptidyl-carrier protein] = aculene A + holo-[peptidyl-carrier protein]. It functions in the pathway secondary metabolite biosynthesis. Thiohydrolase; part of the gene cluster that mediates the biosynthesis of aculenes, a unique type of norsesquiterpenes that contain a nordaucane skeleton linked to an L-proline moiety and are of mixed biosynthetic origin. The pathway begins with the synthesis of dauca-4,7-diene by the terpene cyclase aneC using farnesyl pyrophosphate (FPP) as substrate. The cytochrome P450 monooxygenase aneF then performs the initial oxidation at C-12 of dauca-4,7-diene to yield asperaculane D. Asperaculane D is substrate of the cytochrome P450 monooxygenase aneD for C-10 hydroxylation to yield asperaculane E. The cytochrome P450 monooxygenase aneG then converts asperaculane E into aculene D via C-2 oxidation. The monomodular nonribosomal peptide synthtase aneB adenylates L-proline and the thiohydrolase aneE transfers this activated L-proline derivative to aculenes D and C to produce respectively aculenes B and A. The dioxygenase aneA converts aculene D into aculene C, and aculene B into aculene A by introducing the 5,6-alkene moiety. Asperculanes A, B, C and F, as well as 14-prolyl asperculane C, might be shunt products of the pathway. In Aspergillus aculeatus (strain ATCC 16872 / CBS 172.66 / WB 5094), this protein is Thiohydrolase aneE.